Here is a 565-residue protein sequence, read N- to C-terminus: MSDQKLSVNEYLKTDSNYLRGTIEEGLDTSLTGAFNDADQQLIKFHGFYQQDDRDLRNERKEQKLEPLYSFMLRARVAGGVCTPKQWLGVDKIASTLTSSNSIRLTTRQTFQYHGIPKRNLKTLIQDLDREALDSIAACGDVNRNVMCNPNPVESKLHQQAYYWAKKLSDNYLPRTKAYAEIWLGDDKVAVSESEEVEPVYGKTYLPRKFKMAVAVPPDNDVDVYTNDLGFIAVAEDGELVGFNMVAGGGMGSTHGEVATFPRLGDDFGFIKAEDCLKFAEAVLKVQRDWGNRSDRKQSRLKYTIVKHGFEAFKAEVEQRAGVKFEPKREVVIGDRGDRYGWIKGVDNNWHLTLFIEGGRIKDLPGQPLQTGLREIALVHKGDFRMTANQNIIIAGVAEEDKAQIEALARSHGLMGKLISPTRGHSIACVALPTCALAMAEAERYFPDFMTKVEALQEKHGFLEQPIVIRMTGCPNGCARPFAAEIGLVGKAPGRYNLYLGASFEGTRLNKLYRENIQEAEILAALDELFARYVKEREAGETFGNFTVRVGVVKAVIDAAKDFHG.

4 residues coordinate [4Fe-4S] cluster: C429, C435, C474, and C478. A siroheme-binding site is contributed by C478.

This sequence belongs to the nitrite and sulfite reductase 4Fe-4S domain family. Alpha(8)-beta(8). The alpha component is a flavoprotein, the beta component is a hemoprotein. Requires siroheme as cofactor. [4Fe-4S] cluster is required as a cofactor.

The catalysed reaction is hydrogen sulfide + 3 NADP(+) + 3 H2O = sulfite + 3 NADPH + 4 H(+). It participates in sulfur metabolism; hydrogen sulfide biosynthesis; hydrogen sulfide from sulfite (NADPH route): step 1/1. Component of the sulfite reductase complex that catalyzes the 6-electron reduction of sulfite to sulfide. This is one of several activities required for the biosynthesis of L-cysteine from sulfate. The chain is Sulfite reductase [NADPH] hemoprotein beta-component from Shewanella loihica (strain ATCC BAA-1088 / PV-4).